The chain runs to 148 residues: MIKEELNLWAEGVEFRHLDAYYNFILSVLNFLCIKEYELSVILCNNEYIQKLNGEFRQKPEPTDVLSFNYFEGSEQINHKIQGDIVISLEYLEFSSLEFNVEMYEELQRNTIHGILHLIGYTHDTNDFQNETMLIIQERVLRETRRVF.

Histidine 113, histidine 117, and histidine 123 together coordinate Zn(2+).

Belongs to the endoribonuclease YbeY family. Zn(2+) is required as a cofactor.

The protein resides in the cytoplasm. Functionally, single strand-specific metallo-endoribonuclease involved in late-stage 70S ribosome quality control and in maturation of the 3' terminus of the 16S rRNA. This is Endoribonuclease YbeY from Borrelia recurrentis (strain A1).